Here is a 284-residue protein sequence, read N- to C-terminus: Four and a half LIM domains protein 5 (284 aa).

The segment at 8 to 32 adopts a C4-type zinc-finger fold; the sequence is CQYCTASLLGKKYVLKDDSLFCVTC. LIM zinc-binding domains follow at residues 39–100, 101–160, 161–220, and 223–283; these read NYCE…ECSS, KCFH…KEFA, HYCN…LYAN, and VACS…MDSD.

As to quaternary structure, interacts with CREM (via the third LIM domain). Interacts (via second LIM domain) with SPAG8.

The protein resides in the nucleus. In terms of biological role, may be involved in the regulation of spermatogenesis. Stimulates CREM transcriptional activity in a phosphorylation-independent manner. This Macaca fascicularis (Crab-eating macaque) protein is Four and a half LIM domains protein 5 (FHL5).